A 988-amino-acid chain; its full sequence is MSFALEETLESDWVAVRPHVFDEREKHKFVFIVAWNEIEGKFAITCHNRTAQRQRSGSREQAGARGGAEAGGAASDGSRGPGSPAGRGRPEATASATLVRSPGPRRSSAWAEGGSPRSTRSLLGDPRLRSPGSKGAESRLRSPVRAKPIPGQKTSEADDAAGAAAAAARPAPREAQVSSVRIVSASGTVSEEIEVLEMVKEDEAPLALSDAEQPPPATELESPAEECSWAGLFSFQDLRAVHQQLCSVNSQLEPCLPVFPEEPSGMWTVLFGGAPEMTEQEIDTLCYQLQVYLGHGLDTCGWKILSQVLFTETDDPEEYYESLSELRQKGYEEVLQRARKRIQELLDKHKNTESMVELLDLYQMEDEAYSSLAEATTELYQYLLQPFRDMRELAMLRRQQIKISMENDYLGPRRIESLQKEDADWQRKAHMAVLSIQDLTVKYFEITAKAQKAVYDRMRADQKKFGKASWAAAAERMEKLQYAVSKETLQMMRAKEICLEQRKHALKEEMQSLRGGTEAIARLDQLEADYYDLQLQLYEVQFEILKCEELLLTAQLESIKRLISEKRDEVVYYDTYESMEAMLEKEEMAASAYLQREELQKLQQKARQLEARRGRVSAKKSYLRNKKEICIAKHNEKIQQRTRIEDEYRTHHTVQLKREKLHDEEERKSAWVSQERQRTLDRLRTFKQRYPGQVILKSTRLRLAHARRKGAASPVLQEDHCDSLPSVLQVEEKTEEVGEGRVKRGPSQTTEPQSLVQLEDTSLTQLEATSLPLSGVTSELPPTISLPLLNNNLEPCSVTINPLPSPLPPTPPPPPPPPPPPPPPPLPVAKDSGPETLEKDLPRKEGNEKRIPKSASAPSAHLFDSSQLVSARKKLRKTAEGLQRRRVSSPMDEVLASLKRGSFHLKKVEQRTLPPFPDEDDSNNILAQIRKGVKLKKVQKDVLRESFTLLPDTDPLTRSIHEALRRIKEASPESEDEEEALPCTDWEN.

Positions 1-126 (MSFALEETLE…RSTRSLLGDP (126 aa)) are interaction with p300/EP300. The tract at residues 51 to 178 (AQRQRSGSRE…RPAPREAQVS (128 aa)) is disordered. Phosphoserine occurs at positions 115 and 121. Residues 160–175 (AAGAAAAAARPAPREA) are compositionally biased toward low complexity. 3 coiled-coil regions span residues 324 to 360 (SELR…ELLD), 489 to 541 (LQMM…YEVQ), and 590 to 621 (ASAY…AKKS). The segment at 478 to 567 (EKLQYAVSKE…SIKRLISEKR (90 aa)) is interaction with p300/EP300. Residue serine 713 is modified to Phosphoserine. The span at 731–742 (EEKTEEVGEGRV) shows a compositional bias: basic and acidic residues. 2 disordered regions span residues 731-755 (EEKT…PQSL) and 800-865 (INPL…LFDS). Polar residues predominate over residues 746–755 (PSQTTEPQSL). Positions 803 to 827 (LPSPLPPTPPPPPPPPPPPPPPPLP) are enriched in pro residues. The span at 832–851 (SGPETLEKDLPRKEGNEKRI) shows a compositional bias: basic and acidic residues. Serine 888 carries the post-translational modification Phosphoserine. The WH2 domain occupies 921–938 (DSNNILAQIRKGVKLKKV). Residues 967 to 988 (IKEASPESEDEEEALPCTDWEN) are disordered. Residues 972–988 (PESEDEEEALPCTDWEN) are compositionally biased toward acidic residues. Residue serine 974 is modified to Phosphoserine.

This sequence belongs to the JMY family. As to quaternary structure, interacts with p300/EP300, the complex activates p53/TP53 transcriptional activity. Interacts with TTC5; the interaction facilitates the association between JMY and p300/EP300. Interacts with MAP1LC3B; the interaction results in the activation of JYM's nucleation activity in the cytoplasm. Interacts with TTC5/STRAP; the interaction results in the inhibition of JYM's nucleation activity in the cytoplasm due to competition with MAP1LC3B binding. Post-translationally, ubiquitinated by MDM2, leading to its subsequent degradation by the proteasome. In case of DNA damage, the interaction with MDM2 is altered, preventing degradation and allowing interaction with p300/EP300 and its function in p53/TP53 stress response.

It is found in the nucleus. Its subcellular location is the cytoplasmic vesicle. It localises to the cytoplasm. The protein localises to the cytoskeleton. The protein resides in the endomembrane system. It is found in the autophagosome membrane. Acts both as a nuclear p53/TP53-cofactor and a cytoplasmic regulator of actin dynamics depending on conditions. In nucleus, acts as a cofactor that increases p53/TP53 response via its interaction with p300/EP300. Increases p53/TP53-dependent transcription and apoptosis, suggesting an important role in p53/TP53 stress response such as DNA damage. In cytoplasm, acts as a nucleation-promoting factor for both branched and unbranched actin filaments. Activates the Arp2/3 complex to induce branched actin filament networks. Also catalyzes actin polymerization in the absence of Arp2/3, creating unbranched filaments. Contributes to cell motility by controlling actin dynamics. May promote the rapid formation of a branched actin network by first nucleating new mother filaments and then activating Arp2/3 to branch off these filaments. Upon nutrient stress, directly recruited by MAP1LC3B to the phagophore membrane surfaces to promote actin assembly during autophagy. The p53/TP53-cofactor and actin activator activities are regulated via its subcellular location. This is Junction-mediating and -regulatory protein (JMY) from Homo sapiens (Human).